Consider the following 132-residue polypeptide: N,N-dimethylformamidase alpha subunit (132 aa).

In terms of assembly, heterotetramer of two DmfA1 (alpha) and two DmfA2 (beta) subunits.

The catalysed reaction is N,N-dimethylformamide + H2O = dimethylamine + formate. With respect to regulation, activity is slightly inhibited by Mg(2+) and Mn(2+), and slightly increased by Cu(2+). Activity is slightly inhibited by the chelating agents 8-hydroxyquinoline, ethylenediaminetetraacetate, o-phenanthroline and 2,2'-bipyridyl. In terms of biological role, hydrolyzes N,N-dimethylformamide, and to a lesser extent N,N-dimethylacetamide and N,N-diethylacetamide. Has no activity against the substituted amides N-methylformamide, N-ethylformamide, N-ethylformamide and N-methylacetamide or the unsubstituted amides formamide, nicotinamide, acetoamide, benzamide, acetamide and acrylamide. The polypeptide is N,N-dimethylformamidase alpha subunit (Alcaligenes sp).